A 130-amino-acid chain; its full sequence is Phosphoribosyl-AMP cyclohydrolase (130 aa).

Residue Asp77 coordinates Mg(2+). A Zn(2+)-binding site is contributed by Cys78. Positions 79 and 81 each coordinate Mg(2+). Cys95 and Cys102 together coordinate Zn(2+).

The protein belongs to the PRA-CH family. Homodimer. Mg(2+) is required as a cofactor. Requires Zn(2+) as cofactor.

The protein localises to the cytoplasm. It carries out the reaction 1-(5-phospho-beta-D-ribosyl)-5'-AMP + H2O = 1-(5-phospho-beta-D-ribosyl)-5-[(5-phospho-beta-D-ribosylamino)methylideneamino]imidazole-4-carboxamide. Its pathway is amino-acid biosynthesis; L-histidine biosynthesis; L-histidine from 5-phospho-alpha-D-ribose 1-diphosphate: step 3/9. Catalyzes the hydrolysis of the adenine ring of phosphoribosyl-AMP. This Pseudomonas putida (strain ATCC 700007 / DSM 6899 / JCM 31910 / BCRC 17059 / LMG 24140 / F1) protein is Phosphoribosyl-AMP cyclohydrolase.